The following is a 219-amino-acid chain: Probable GTP-binding protein EngB (219 aa).

The region spanning 42–219 (SVPEIAFAGR…RTAVLEAVEL (178 aa)) is the EngB-type G domain. GTP is bound by residues 50–57 (GRSNVGKS), 77–81 (GRTQE), 97–100 (DMPG), 164–167 (TKAD), and 198–200 (TSS). Mg(2+)-binding residues include S57 and T79.

Belongs to the TRAFAC class TrmE-Era-EngA-EngB-Septin-like GTPase superfamily. EngB GTPase family. Mg(2+) is required as a cofactor.

Necessary for normal cell division and for the maintenance of normal septation. The polypeptide is Probable GTP-binding protein EngB (Sphingopyxis alaskensis (strain DSM 13593 / LMG 18877 / RB2256) (Sphingomonas alaskensis)).